The sequence spans 124 residues: Large ribosomal subunit protein eL22z (124 aa).

This sequence belongs to the eukaryotic ribosomal protein eL22 family.

This chain is Large ribosomal subunit protein eL22z (RPL22B), found in Arabidopsis thaliana (Mouse-ear cress).